We begin with the raw amino-acid sequence, 778 residues long: MIVGYRSTIITLSHPKLGNGKTISSNAIFQRSCRVRCSHSTTSSMNGFEDARDRIRESFGKLELSPSSYDTAWVAMVPSRHSLNEPCFPQCLDWIIENQREDGSWGLNPTHPLLLKDSLSSTLACLLALTKWRVGDEQIKRGLGFIETYGWAVDNKDQISPLGFEVIFSSMIKSAEKLDLNLPLNLHLVNLVKCKRDSTIKRNVEYMGEGVGELCDWKEMIKLHQRQNGSLFDSPATTAAALIYHQHDQKCYQYLNSIFQQHKNWVPTMYPTKVHSLLCLVDTLQNLGVHRHFKSEIKKALDEIYRLWQQKNEQIFSNVTHCAMAFRLLRMSYYDVSSDELAEFVDEEHFFATNGKYKSHVEILELHKASQLAIDHEKDDILDKINNWTRAFMEQKLLNNGFIDRMSKKEVELALRKFYTTSHLAENRRYIKSYEENNFKILKAAYRSPNINNKDLLAFSIHDFELCQAQHREELQQLKRWFEDYRLDQLGLAERYIHASYLFGVTVIPEPELSDARLMYAKYVMLLTIVDDHFESFASKDECFNIIELVERWDDYASVGYKSEKVKVFFSVFYKSIEELATIAEIKQGRSVKNHLINLWLELMKLMLMERVEWCSGKTIPSIEEYLYVTSITFCAKLIPLSTQYFLGIKISKDLLESDEICGLWNCSGRVMRILNDLQDSKREQKEVSINLVTLLMKSMSEEEAIMKIKEILEMNRRELLKMVLVQKKGSQLPQLCKDIFWRTSKWAHFTYSQTDGYRIAEEMKNHIDEVFYKPLNH.

The transit peptide at 1–36 (MIVGYRSTIITLSHPKLGNGKTISSNAIFQRSCRVR) directs the protein to the chloroplast. Residues Asp-531, Asn-676, and Glu-684 each contribute to the Mg(2+) site. The DDXXD motif signature appears at 531 to 535 (DDHFE).

It belongs to the terpene synthase family. Tpse subfamily. Requires Mg(2+) as cofactor. In terms of tissue distribution, trichomes.

The protein resides in the plastid. It localises to the chloroplast. The enzyme catalyses neryl diphosphate = beta-phellandrene + diphosphate. In terms of biological role, monoterpene synthase catalyzing the production of beta-phellandrene from neryl diphosphate. Also produces lower amounts of delta-2-carene, alpha-phellandrene and limonene. When incubated in vitro with geranyl diphosphate, catalyzes the formation of acyclic myrcene and ocimene as major products in addition to beta-phellandrene. This Solanum lycopersicum (Tomato) protein is Beta-phellandrene synthase (neryl-diphosphate-cyclizing), chloroplastic (PHS1).